The primary structure comprises 155 residues: DNA-directed RNA polymerase 1A (155 aa).

Asp88 is an active-site residue.

Belongs to the phage and mitochondrial RNA polymerase family.

The enzyme catalyses RNA(n) + a ribonucleoside 5'-triphosphate = RNA(n+1) + diphosphate. Its function is as follows. DNA-dependent RNA polymerase catalyzes the transcription of DNA into RNA using the four ribonucleoside triphosphates as substrates. The protein is DNA-directed RNA polymerase 1A (RPOT1-SYL) of Nicotiana tabacum (Common tobacco).